The primary structure comprises 337 residues: Ferredoxin--NADP reductase (337 aa).

The FAD site is built by Asp-33, Gln-41, Tyr-46, Ala-86, Phe-120, Asp-286, and Thr-327.

Belongs to the ferredoxin--NADP reductase type 2 family. As to quaternary structure, homodimer. FAD serves as cofactor.

The catalysed reaction is 2 reduced [2Fe-2S]-[ferredoxin] + NADP(+) + H(+) = 2 oxidized [2Fe-2S]-[ferredoxin] + NADPH. The chain is Ferredoxin--NADP reductase from Rickettsia canadensis (strain McKiel).